The primary structure comprises 374 residues: Putative cullin-like protein 2 (374 aa).

The protein belongs to the cullin family.

This is Putative cullin-like protein 2 from Arabidopsis thaliana (Mouse-ear cress).